Reading from the N-terminus, the 162-residue chain is Cyclic pyranopterin monophosphate synthase (162 aa).

Residues 75–77 (LCH) and 113–114 (ME) contribute to the substrate site. Aspartate 128 is an active-site residue.

It belongs to the MoaC family. Homohexamer; trimer of dimers.

The catalysed reaction is (8S)-3',8-cyclo-7,8-dihydroguanosine 5'-triphosphate = cyclic pyranopterin phosphate + diphosphate. It functions in the pathway cofactor biosynthesis; molybdopterin biosynthesis. Catalyzes the conversion of (8S)-3',8-cyclo-7,8-dihydroguanosine 5'-triphosphate to cyclic pyranopterin monophosphate (cPMP). The polypeptide is Cyclic pyranopterin monophosphate synthase (Burkholderia cenocepacia (strain HI2424)).